Consider the following 65-residue polypeptide: Large ribosomal subunit protein bL28 (65 aa).

This sequence belongs to the bacterial ribosomal protein bL28 family.

This Bifidobacterium animalis subsp. lactis (strain AD011) protein is Large ribosomal subunit protein bL28.